The following is a 520-amino-acid chain: Hydroxymethylglutaryl-CoA synthase, cytoplasmic (520 aa).

Ser-4 carries the phosphoserine modification. 2 residues coordinate (3S)-3-hydroxy-3-methylglutaryl-CoA: Asp-43 and Ala-44. 44–46 (AGK) contacts CoA. An N6-acetyllysine modification is found at Lys-46. Glu-95 serves as the catalytic Proton donor/acceptor. Residues Cys-129, Asn-167, Thr-171, Ser-221, and His-264 each coordinate (3S)-3-hydroxy-3-methylglutaryl-CoA. Residue Cys-129 is the Acyl-thioester intermediate of the active site. Asn-167 is a binding site for CoA. Residue Ser-221 coordinates CoA. His-264 serves as the catalytic Proton donor/acceptor. Positions 269 and 273 each coordinate CoA. Residues Lys-273, Asn-343, and Ser-377 each coordinate (3S)-3-hydroxy-3-methylglutaryl-CoA. Lys-273 is modified (N6-acetyllysine). The tract at residues 486 to 520 (SNTATEHIPSPAKKVPRLPATAAESESAVISNGEH) is disordered. Ser-495 and Ser-516 each carry phosphoserine.

Belongs to the thiolase-like superfamily. HMG-CoA synthase family. In terms of assembly, homodimer.

It localises to the cytoplasm. The enzyme catalyses acetoacetyl-CoA + acetyl-CoA + H2O = (3S)-3-hydroxy-3-methylglutaryl-CoA + CoA + H(+). The protein operates within metabolic intermediate biosynthesis; (R)-mevalonate biosynthesis; (R)-mevalonate from acetyl-CoA: step 2/3. Functionally, this enzyme condenses acetyl-CoA with acetoacetyl-CoA to form HMG-CoA, which is converted by HMG-CoA reductase (HMGCR) into mevalonate, a precursor for cholesterol synthesis. This Cricetulus griseus (Chinese hamster) protein is Hydroxymethylglutaryl-CoA synthase, cytoplasmic.